Here is a 207-residue protein sequence, read N- to C-terminus: Inhibitor of hydrogen peroxide resistance (207 aa).

A DNA-binding region (H-T-H motif) is located at residues 163-182 (MNYIHQRTRISRSVVAEVLA).

Belongs to the IprA family.

Involved in oxidative stress resistance. The polypeptide is Inhibitor of hydrogen peroxide resistance (Escherichia coli O157:H7).